The chain runs to 353 residues: 3-isopropylmalate dehydrogenase (353 aa).

Residue 75-88 (GPKWENLPHEHKPE) participates in NAD(+) binding. Substrate contacts are provided by R95, R105, R133, and D219. Positions 219, 243, and 247 each coordinate Mg(2+). An NAD(+)-binding site is contributed by 276–288 (GSAPDIAGKNIAN).

Belongs to the isocitrate and isopropylmalate dehydrogenases family. LeuB type 1 subfamily. As to quaternary structure, homodimer. It depends on Mg(2+) as a cofactor. Mn(2+) serves as cofactor.

It localises to the cytoplasm. It catalyses the reaction (2R,3S)-3-isopropylmalate + NAD(+) = 4-methyl-2-oxopentanoate + CO2 + NADH. Its pathway is amino-acid biosynthesis; L-leucine biosynthesis; L-leucine from 3-methyl-2-oxobutanoate: step 3/4. In terms of biological role, catalyzes the oxidation of 3-carboxy-2-hydroxy-4-methylpentanoate (3-isopropylmalate) to 3-carboxy-4-methyl-2-oxopentanoate. The product decarboxylates to 4-methyl-2 oxopentanoate. This Chlorobium luteolum (strain DSM 273 / BCRC 81028 / 2530) (Pelodictyon luteolum) protein is 3-isopropylmalate dehydrogenase.